Reading from the N-terminus, the 215-residue chain is Thiamine-phosphate synthase (215 aa).

4-amino-2-methyl-5-(diphosphooxymethyl)pyrimidine-binding positions include 37–41 and Asn69; that span reads QLRIK. The Mg(2+) site is built by Asp70 and Asp89. Position 108 (Ser108) interacts with 4-amino-2-methyl-5-(diphosphooxymethyl)pyrimidine. 134-136 contacts 2-[(2R,5Z)-2-carboxy-4-methylthiazol-5(2H)-ylidene]ethyl phosphate; the sequence is TQT. Lys137 contributes to the 4-amino-2-methyl-5-(diphosphooxymethyl)pyrimidine binding site. Residues Gly166 and 186–187 each bind 2-[(2R,5Z)-2-carboxy-4-methylthiazol-5(2H)-ylidene]ethyl phosphate; that span reads VS.

Belongs to the thiamine-phosphate synthase family. Mg(2+) is required as a cofactor.

It carries out the reaction 2-[(2R,5Z)-2-carboxy-4-methylthiazol-5(2H)-ylidene]ethyl phosphate + 4-amino-2-methyl-5-(diphosphooxymethyl)pyrimidine + 2 H(+) = thiamine phosphate + CO2 + diphosphate. The catalysed reaction is 2-(2-carboxy-4-methylthiazol-5-yl)ethyl phosphate + 4-amino-2-methyl-5-(diphosphooxymethyl)pyrimidine + 2 H(+) = thiamine phosphate + CO2 + diphosphate. The enzyme catalyses 4-methyl-5-(2-phosphooxyethyl)-thiazole + 4-amino-2-methyl-5-(diphosphooxymethyl)pyrimidine + H(+) = thiamine phosphate + diphosphate. It functions in the pathway cofactor biosynthesis; thiamine diphosphate biosynthesis; thiamine phosphate from 4-amino-2-methyl-5-diphosphomethylpyrimidine and 4-methyl-5-(2-phosphoethyl)-thiazole: step 1/1. Its function is as follows. Condenses 4-methyl-5-(beta-hydroxyethyl)thiazole monophosphate (THZ-P) and 2-methyl-4-amino-5-hydroxymethyl pyrimidine pyrophosphate (HMP-PP) to form thiamine monophosphate (TMP). The polypeptide is Thiamine-phosphate synthase (Yersinia pestis (strain Pestoides F)).